The chain runs to 231 residues: Small ribosomal subunit protein uS3 (231 aa).

Positions 39–107 constitute a KH type-2 domain; it reads IRKYIVENLP…DVKLNIVEIR (69 aa).

Belongs to the universal ribosomal protein uS3 family. As to quaternary structure, part of the 30S ribosomal subunit. Forms a tight complex with proteins S10 and S14.

Binds the lower part of the 30S subunit head. Binds mRNA in the 70S ribosome, positioning it for translation. The sequence is that of Small ribosomal subunit protein uS3 from Novosphingobium aromaticivorans (strain ATCC 700278 / DSM 12444 / CCUG 56034 / CIP 105152 / NBRC 16084 / F199).